The primary structure comprises 350 residues: UDP-3-O-acylglucosamine N-acyltransferase (350 aa).

Catalysis depends on histidine 244, which acts as the Proton acceptor.

It belongs to the transferase hexapeptide repeat family. LpxD subfamily. Homotrimer.

It catalyses the reaction a UDP-3-O-[(3R)-3-hydroxyacyl]-alpha-D-glucosamine + a (3R)-hydroxyacyl-[ACP] = a UDP-2-N,3-O-bis[(3R)-3-hydroxyacyl]-alpha-D-glucosamine + holo-[ACP] + H(+). It functions in the pathway bacterial outer membrane biogenesis; LPS lipid A biosynthesis. Catalyzes the N-acylation of UDP-3-O-acylglucosamine using 3-hydroxyacyl-ACP as the acyl donor. Is involved in the biosynthesis of lipid A, a phosphorylated glycolipid that anchors the lipopolysaccharide to the outer membrane of the cell. The polypeptide is UDP-3-O-acylglucosamine N-acyltransferase (Janthinobacterium sp. (strain Marseille) (Minibacterium massiliensis)).